The chain runs to 518 residues: ORC1-type DNA replication protein 7 (518 aa).

94–98 (TGKTA) serves as a coordination point for ATP. Residues 165 to 196 (DDDPNALEIGGSPGDDRTGNESSEGSDVSDSF) form a disordered region. Residues 186–196 (SSEGSDVSDSF) show a composition bias toward low complexity. Residues Y318 and R330 each coordinate ATP.

Belongs to the CDC6/cdc18 family.

Its function is as follows. Involved in regulation of DNA replication. Required to initiate DNA replication of the circular chromosome at a nearby autonomously replicating sequence (ARS) oriC1. The chain is ORC1-type DNA replication protein 7 (orc7) from Halobacterium salinarum (strain ATCC 700922 / JCM 11081 / NRC-1) (Halobacterium halobium).